Consider the following 254-residue polypeptide: Phosphomannomutase (254 aa).

Asp19 acts as the Nucleophile in catalysis. Positions 19 and 21 each coordinate Mg(2+). The active-site Proton donor/acceptor is the Asp21. Alpha-D-mannose 1-phosphate-binding residues include Arg28, Arg130, Arg141, Arg148, Ser186, and Asp188. 4 residues coordinate Mg(2+): Asp216, Phe228, Asp230, and Thr233. Ser240 carries the phosphoserine modification.

The protein belongs to the eukaryotic PMM family. In terms of assembly, homodimer.

The protein resides in the cytoplasm. It catalyses the reaction alpha-D-mannose 1-phosphate = D-mannose 6-phosphate. The protein operates within nucleotide-sugar biosynthesis; GDP-alpha-D-mannose biosynthesis; alpha-D-mannose 1-phosphate from D-fructose 6-phosphate: step 2/2. In terms of biological role, involved in the synthesis of the GDP-mannose and dolichol-phosphate-mannose required for a number of critical mannosyl transfer reactions such as folding and glycosylation of secretory proteins in the ER lumen. In Saccharomyces cerevisiae (strain ATCC 204508 / S288c) (Baker's yeast), this protein is Phosphomannomutase.